A 168-amino-acid polypeptide reads, in one-letter code: Large ribosomal subunit protein uL10 (168 aa).

This sequence belongs to the universal ribosomal protein uL10 family. In terms of assembly, part of the ribosomal stalk of the 50S ribosomal subunit. The N-terminus interacts with L11 and the large rRNA to form the base of the stalk. The C-terminus forms an elongated spine to which L12 dimers bind in a sequential fashion forming a multimeric L10(L12)X complex.

Functionally, forms part of the ribosomal stalk, playing a central role in the interaction of the ribosome with GTP-bound translation factors. In Ralstonia nicotianae (strain ATCC BAA-1114 / GMI1000) (Ralstonia solanacearum), this protein is Large ribosomal subunit protein uL10.